The following is a 197-amino-acid chain: Guanylate kinase (197 aa).

A Guanylate kinase-like domain is found at glycine 10–isoleucine 187. Alanine 17 to threonine 24 contributes to the ATP binding site.

This sequence belongs to the guanylate kinase family.

Its subcellular location is the cytoplasm. It carries out the reaction GMP + ATP = GDP + ADP. In terms of biological role, essential for recycling GMP and indirectly, cGMP. The polypeptide is Guanylate kinase (Protochlamydia amoebophila (strain UWE25)).